We begin with the raw amino-acid sequence, 369 residues long: UDP-N-acetylglucosamine--N-acetylmuramyl-(pentapeptide) pyrophosphoryl-undecaprenol N-acetylglucosamine transferase (369 aa).

UDP-N-acetyl-alpha-D-glucosamine-binding positions include 10 to 12, N124, R166, S196, I251, and Q296; that span reads TAG.

This sequence belongs to the glycosyltransferase 28 family. MurG subfamily.

Its subcellular location is the cell membrane. The catalysed reaction is di-trans,octa-cis-undecaprenyl diphospho-N-acetyl-alpha-D-muramoyl-L-alanyl-D-glutamyl-meso-2,6-diaminopimeloyl-D-alanyl-D-alanine + UDP-N-acetyl-alpha-D-glucosamine = di-trans,octa-cis-undecaprenyl diphospho-[N-acetyl-alpha-D-glucosaminyl-(1-&gt;4)]-N-acetyl-alpha-D-muramoyl-L-alanyl-D-glutamyl-meso-2,6-diaminopimeloyl-D-alanyl-D-alanine + UDP + H(+). It participates in cell wall biogenesis; peptidoglycan biosynthesis. Functionally, cell wall formation. Catalyzes the transfer of a GlcNAc subunit on undecaprenyl-pyrophosphoryl-MurNAc-pentapeptide (lipid intermediate I) to form undecaprenyl-pyrophosphoryl-MurNAc-(pentapeptide)GlcNAc (lipid intermediate II). This is UDP-N-acetylglucosamine--N-acetylmuramyl-(pentapeptide) pyrophosphoryl-undecaprenol N-acetylglucosamine transferase from Acetivibrio thermocellus (strain ATCC 27405 / DSM 1237 / JCM 9322 / NBRC 103400 / NCIMB 10682 / NRRL B-4536 / VPI 7372) (Clostridium thermocellum).